Consider the following 227-residue polypeptide: Cytochrome c oxidase subunit 2 (227 aa).

Residues 1-14 lie on the Mitochondrial intermembrane side of the membrane; sequence MAYPLQLGFQDASS. The helical transmembrane segment at 15–45 threads the bilayer; the sequence is PIMEELLHFHDHTLMIVFLISSLVLYIISLM. Residues 46 to 59 lie on the Mitochondrial matrix side of the membrane; sequence LTTKLTHTSTMDAQ. The chain crosses the membrane as a helical span at residues 60–87; the sequence is EVETIWTILPAIILILIALPSLRILYMM. Residues 88 to 227 are Mitochondrial intermembrane-facing; that stretch reads DEINNPSLTV…HFENWTTTML (140 aa). Cu cation-binding residues include H161, C196, E198, C200, H204, and M207. Position 198 (E198) interacts with Mg(2+).

Belongs to the cytochrome c oxidase subunit 2 family. Component of the cytochrome c oxidase (complex IV, CIV), a multisubunit enzyme composed of 14 subunits. The complex is composed of a catalytic core of 3 subunits MT-CO1, MT-CO2 and MT-CO3, encoded in the mitochondrial DNA, and 11 supernumerary subunits COX4I, COX5A, COX5B, COX6A, COX6B, COX6C, COX7A, COX7B, COX7C, COX8 and NDUFA4, which are encoded in the nuclear genome. The complex exists as a monomer or a dimer and forms supercomplexes (SCs) in the inner mitochondrial membrane with NADH-ubiquinone oxidoreductase (complex I, CI) and ubiquinol-cytochrome c oxidoreductase (cytochrome b-c1 complex, complex III, CIII), resulting in different assemblies (supercomplex SCI(1)III(2)IV(1) and megacomplex MCI(2)III(2)IV(2)). Found in a complex with TMEM177, COA6, COX18, COX20, SCO1 and SCO2. Interacts with TMEM177 in a COX20-dependent manner. Interacts with COX20. Interacts with COX16. Cu cation serves as cofactor.

It is found in the mitochondrion inner membrane. The catalysed reaction is 4 Fe(II)-[cytochrome c] + O2 + 8 H(+)(in) = 4 Fe(III)-[cytochrome c] + 2 H2O + 4 H(+)(out). In terms of biological role, component of the cytochrome c oxidase, the last enzyme in the mitochondrial electron transport chain which drives oxidative phosphorylation. The respiratory chain contains 3 multisubunit complexes succinate dehydrogenase (complex II, CII), ubiquinol-cytochrome c oxidoreductase (cytochrome b-c1 complex, complex III, CIII) and cytochrome c oxidase (complex IV, CIV), that cooperate to transfer electrons derived from NADH and succinate to molecular oxygen, creating an electrochemical gradient over the inner membrane that drives transmembrane transport and the ATP synthase. Cytochrome c oxidase is the component of the respiratory chain that catalyzes the reduction of oxygen to water. Electrons originating from reduced cytochrome c in the intermembrane space (IMS) are transferred via the dinuclear copper A center (CU(A)) of subunit 2 and heme A of subunit 1 to the active site in subunit 1, a binuclear center (BNC) formed by heme A3 and copper B (CU(B)). The BNC reduces molecular oxygen to 2 water molecules using 4 electrons from cytochrome c in the IMS and 4 protons from the mitochondrial matrix. The chain is Cytochrome c oxidase subunit 2 (MT-CO2) from Tupaia glis (Common tree shrew).